We begin with the raw amino-acid sequence, 303 residues long: Uracil phosphoribosyltransferase (303 aa).

The segment at 1-86 (MHIIMKTILA…RYVSSTPTDS (86 aa)) is unknown. Residues 87 to 303 (LSSKPLAAVY…DRLCGTSNPS (217 aa)) are UPRTase. Residues Arg170, Arg195, and 222-230 (DPMLATGGS) each bind 5-phospho-alpha-D-ribose 1-diphosphate. Uracil-binding positions include Ile285 and 290-292 (GDA). Asp291 serves as a coordination point for 5-phospho-alpha-D-ribose 1-diphosphate.

This sequence belongs to the UPRTase family. Mg(2+) serves as cofactor.

The catalysed reaction is UMP + diphosphate = 5-phospho-alpha-D-ribose 1-diphosphate + uracil. The protein operates within pyrimidine metabolism; UMP biosynthesis via salvage pathway; UMP from uracil: step 1/1. Allosterically activated by GTP. Functionally, catalyzes the conversion of uracil and 5-phospho-alpha-D-ribose 1-diphosphate (PRPP) to UMP and diphosphate. The protein is Uracil phosphoribosyltransferase (upp) of Chlamydia muridarum (strain MoPn / Nigg).